The following is a 583-amino-acid chain: ATP-dependent lipid A-core flippase (583 aa).

The next 5 membrane-spanning stretches (helical) occupy residues 27–47 (LAVAVVALIINAVSDTYMVSL), 69–89 (LLVFGLMFIRGISSFVSTYCL), 142–162 (ALVSIVREGTSIIGLLVLMFY), 165–185 (WQLSLVLILVAPVVAWAIGFV), and 249–269 (AAANPIIQMIASIAIVVVLYL). The ABC transmembrane type-1 domain occupies 28–310 (AVAVVALIIN…LTNVTSQFQR (283 aa)). Positions 342–578 (VNVKDISFTY…DGAYAQLHRI (237 aa)) constitute an ABC transporter domain. 376–383 (GRSGSGKS) is a binding site for ATP.

It belongs to the ABC transporter superfamily. Lipid exporter (TC 3.A.1.106) family. In terms of assembly, homodimer.

It localises to the cell inner membrane. It catalyses the reaction ATP + H2O + lipid A-core oligosaccharideSide 1 = ADP + phosphate + lipid A-core oligosaccharideSide 2.. Its function is as follows. Involved in lipopolysaccharide (LPS) biosynthesis. Translocates lipid A-core from the inner to the outer leaflet of the inner membrane. Transmembrane domains (TMD) form a pore in the inner membrane and the ATP-binding domain (NBD) is responsible for energy generation. This Vibrio vulnificus (strain YJ016) protein is ATP-dependent lipid A-core flippase.